A 257-amino-acid chain; its full sequence is Trans-aconitate 2-methyltransferase (257 aa).

Belongs to the methyltransferase superfamily. Tam family.

The protein localises to the cytoplasm. It carries out the reaction trans-aconitate + S-adenosyl-L-methionine = (E)-3-(methoxycarbonyl)pent-2-enedioate + S-adenosyl-L-homocysteine. Its function is as follows. Catalyzes the S-adenosylmethionine monomethyl esterification of trans-aconitate. The polypeptide is Trans-aconitate 2-methyltransferase (Sinorhizobium medicae (strain WSM419) (Ensifer medicae)).